We begin with the raw amino-acid sequence, 349 residues long: 5,10-methylenetetrahydromethanopterin reductase (349 aa).

Belongs to the mer family. As to quaternary structure, homotetramer composed of two loosely associated dimers.

The protein localises to the cytoplasm. It carries out the reaction 5-methyl-5,6,7,8-tetrahydromethanopterin + oxidized coenzyme F420-(gamma-L-Glu)(n) + H(+) = 5,10-methylenetetrahydromethanopterin + reduced coenzyme F420-(gamma-L-Glu)(n). It participates in one-carbon metabolism; methanogenesis from CO(2); methyl-coenzyme M from 5,10-methylene-5,6,7,8-tetrahydromethanopterin: step 1/2. Its activity is regulated as follows. Requires the presence of relatively high concentrations of either sulfate or phosphate for maximal activity. Catalyzes the reversible reduction of methylene-H(4)MPT to methyl-H(4)MPT. This is 5,10-methylenetetrahydromethanopterin reductase from Methanopyrus kandleri (strain AV19 / DSM 6324 / JCM 9639 / NBRC 100938).